The chain runs to 117 residues: NADH-ubiquinone oxidoreductase chain 3 (117 aa).

Helical transmembrane passes span 3–23 (LLLT…IVSF), 56–76 (FFLV…LLPL), and 85–105 (PMFT…GLIY).

It belongs to the complex I subunit 3 family.

It localises to the mitochondrion membrane. The enzyme catalyses a ubiquinone + NADH + 5 H(+)(in) = a ubiquinol + NAD(+) + 4 H(+)(out). Its function is as follows. Core subunit of the mitochondrial membrane respiratory chain NADH dehydrogenase (Complex I) that is believed to belong to the minimal assembly required for catalysis. Complex I functions in the transfer of electrons from NADH to the respiratory chain. The immediate electron acceptor for the enzyme is believed to be ubiquinone. The polypeptide is NADH-ubiquinone oxidoreductase chain 3 (MT-ND3) (Tetraodon nigroviridis (Spotted green pufferfish)).